Consider the following 300-residue polypeptide: Porphobilinogen deaminase (300 aa).

The residue at position 239 (Cys239) is an S-(dipyrrolylmethanemethyl)cysteine.

This sequence belongs to the HMBS family. In terms of assembly, monomer. It depends on dipyrromethane as a cofactor.

It carries out the reaction 4 porphobilinogen + H2O = hydroxymethylbilane + 4 NH4(+). The protein operates within porphyrin-containing compound metabolism; protoporphyrin-IX biosynthesis; coproporphyrinogen-III from 5-aminolevulinate: step 2/4. Its function is as follows. Tetrapolymerization of the monopyrrole PBG into the hydroxymethylbilane pre-uroporphyrinogen in several discrete steps. The sequence is that of Porphobilinogen deaminase from Francisella tularensis subsp. holarctica (strain FTNF002-00 / FTA).